The chain runs to 432 residues: 3-phosphoshikimate 1-carboxyvinyltransferase (432 aa).

The 3-phosphoshikimate site is built by Lys22, Ser23, and Arg27. Lys22 is a phosphoenolpyruvate binding site. Phosphoenolpyruvate contacts are provided by Gly96 and Arg127. 3-phosphoshikimate is bound by residues Ser173, Ser174, Gln175, Ser201, Asp316, Asn339, and Lys343. Gln175 is a binding site for phosphoenolpyruvate. The Proton acceptor role is filled by Asp316. Phosphoenolpyruvate is bound by residues Arg347, Arg391, and Lys416.

This sequence belongs to the EPSP synthase family. As to quaternary structure, monomer.

Its subcellular location is the cytoplasm. The enzyme catalyses 3-phosphoshikimate + phosphoenolpyruvate = 5-O-(1-carboxyvinyl)-3-phosphoshikimate + phosphate. It participates in metabolic intermediate biosynthesis; chorismate biosynthesis; chorismate from D-erythrose 4-phosphate and phosphoenolpyruvate: step 6/7. Catalyzes the transfer of the enolpyruvyl moiety of phosphoenolpyruvate (PEP) to the 5-hydroxyl of shikimate-3-phosphate (S3P) to produce enolpyruvyl shikimate-3-phosphate and inorganic phosphate. The protein is 3-phosphoshikimate 1-carboxyvinyltransferase of Actinobacillus pleuropneumoniae serotype 7 (strain AP76).